The sequence spans 288 residues: MTHQYPPFYGVYLLQSTKKPLSCYVGSTPNPFRRIRQHNGDLKAGGAWRTKRAHLRPWSMVLIVNGFPSKISALKFEHALQHPNMTRLITTKDIKRKVPQKARALGTHLAFIRLLVRCSYFRRMHLRITFFRSHAHEAWEKNDYDVGSLPPQFQVETDYPSDEAEAPPSTVGSGELDINNRSIEEYLQKCRDAVSNDKQLTCYLSEKTLNISEGNVALCHNCDGAFDVAELAERFLNEEIPEELPFTTPSRHIIPIGGDCPSCLARMEWSNVIKGVLAMRPVLEDNKE.

The GIY-YIG domain occupies 7–90 (PFYGVYLLQS…QHPNMTRLIT (84 aa)).

It belongs to the SLX1 family. In terms of assembly, forms a heterodimer with SLX4. The cofactor is a divalent metal cation.

Its subcellular location is the nucleus. Its function is as follows. Catalytic subunit of the SLX1-SLX4 structure-specific endonuclease that resolves DNA secondary structures generated during DNA repair and recombination. Has endonuclease activity towards branched DNA substrates, introducing single-strand cuts in duplex DNA close to junctions with ss-DNA. This Yarrowia lipolytica (strain CLIB 122 / E 150) (Yeast) protein is Structure-specific endonuclease subunit SLX1.